A 59-amino-acid polypeptide reads, in one-letter code: uncharacterized protein (59 aa).

Helical transmembrane passes span 1-21 (MNMY…YIFI) and 30-50 (GSWI…PYFY).

Its subcellular location is the cell membrane. This is an uncharacterized protein from Bacillus subtilis (strain 168).